The primary structure comprises 179 residues: Riboflavin kinase (179 aa).

G61–R66 lines the CDP pocket. Residues T90 and N92 each coordinate Mg(2+). The FMN site is built by T147 and E155. V160–R163 contributes to the CDP binding site.

Belongs to the archaeal riboflavin kinase family. Mg(2+) is required as a cofactor.

The catalysed reaction is riboflavin + CTP = CDP + FMN + H(+). Its pathway is cofactor biosynthesis; FMN biosynthesis; FMN from riboflavin (CTP route): step 1/1. Its function is as follows. Catalyzes the CTP-dependent phosphorylation of riboflavin (vitamin B2) to form flavin mononucleotide (FMN). The polypeptide is Riboflavin kinase (Ignicoccus hospitalis (strain KIN4/I / DSM 18386 / JCM 14125)).